We begin with the raw amino-acid sequence, 255 residues long: uncharacterized protein (255 aa).

This sequence belongs to the methyltransferase superfamily.

This is an uncharacterized protein from Mycobacterium ulcerans (strain Agy99).